A 207-amino-acid chain; its full sequence is Thiamine-phosphate synthase (207 aa).

Residues 37–41 and Asn69 contribute to the 4-amino-2-methyl-5-(diphosphooxymethyl)pyrimidine site; that span reads QLREK. Asp70 and Asp89 together coordinate Mg(2+). Position 108 (Ser108) interacts with 4-amino-2-methyl-5-(diphosphooxymethyl)pyrimidine. Residue 134–136 participates in 2-[(2R,5Z)-2-carboxy-4-methylthiazol-5(2H)-ylidene]ethyl phosphate binding; it reads TGS. Lys137 is a 4-amino-2-methyl-5-(diphosphooxymethyl)pyrimidine binding site. Residues Gly165 and 185–186 each bind 2-[(2R,5Z)-2-carboxy-4-methylthiazol-5(2H)-ylidene]ethyl phosphate; that span reads IS.

It belongs to the thiamine-phosphate synthase family. Requires Mg(2+) as cofactor.

The catalysed reaction is 2-[(2R,5Z)-2-carboxy-4-methylthiazol-5(2H)-ylidene]ethyl phosphate + 4-amino-2-methyl-5-(diphosphooxymethyl)pyrimidine + 2 H(+) = thiamine phosphate + CO2 + diphosphate. The enzyme catalyses 2-(2-carboxy-4-methylthiazol-5-yl)ethyl phosphate + 4-amino-2-methyl-5-(diphosphooxymethyl)pyrimidine + 2 H(+) = thiamine phosphate + CO2 + diphosphate. It catalyses the reaction 4-methyl-5-(2-phosphooxyethyl)-thiazole + 4-amino-2-methyl-5-(diphosphooxymethyl)pyrimidine + H(+) = thiamine phosphate + diphosphate. It functions in the pathway cofactor biosynthesis; thiamine diphosphate biosynthesis; thiamine phosphate from 4-amino-2-methyl-5-diphosphomethylpyrimidine and 4-methyl-5-(2-phosphoethyl)-thiazole: step 1/1. Its function is as follows. Condenses 4-methyl-5-(beta-hydroxyethyl)thiazole monophosphate (THZ-P) and 2-methyl-4-amino-5-hydroxymethyl pyrimidine pyrophosphate (HMP-PP) to form thiamine monophosphate (TMP). The chain is Thiamine-phosphate synthase from Desulfitobacterium hafniense (strain Y51).